The primary structure comprises 181 residues: NADH-quinone oxidoreductase subunit I (181 aa).

4Fe-4S ferredoxin-type domains lie at 52-81 (TRDS…LKKG) and 91-120 (KFFR…LTPD). C61, C64, C67, C71, C100, C103, C106, and C110 together coordinate [4Fe-4S] cluster.

This sequence belongs to the complex I 23 kDa subunit family. In terms of assembly, NDH-1 is composed of 13 different subunits. Subunits NuoA, H, J, K, L, M, N constitute the membrane sector of the complex. [4Fe-4S] cluster serves as cofactor.

The protein localises to the cell inner membrane. The enzyme catalyses a quinone + NADH + 5 H(+)(in) = a quinol + NAD(+) + 4 H(+)(out). NDH-1 shuttles electrons from NADH, via FMN and iron-sulfur (Fe-S) centers, to quinones in the respiratory chain. The immediate electron acceptor for the enzyme in this species is believed to be ubiquinone. Couples the redox reaction to proton translocation (for every two electrons transferred, four hydrogen ions are translocated across the cytoplasmic membrane), and thus conserves the redox energy in a proton gradient. This chain is NADH-quinone oxidoreductase subunit I, found in Blochmanniella pennsylvanica (strain BPEN).